A 313-amino-acid polypeptide reads, in one-letter code: PDZ domain-containing protein GIPC2 (313 aa).

The segment covering 14–27 (KETSRLVEGEHTDA) has biased composition (basic and acidic residues). The segment at 14-34 (KETSRLVEGEHTDAAVRSLPS) is disordered. The region spanning 117-197 (EVNVYKSEDS…EELFTLTLIE (81 aa)) is the PDZ domain.

It belongs to the GIPC family. As to quaternary structure, probably interacts with SEMA5A.

It is found in the cytoplasm. This Bos taurus (Bovine) protein is PDZ domain-containing protein GIPC2 (GIPC2).